The following is a 135-amino-acid chain: T-cell receptor beta chain V region 3H.25 (135 aa).

The signal sequence occupies residues 1–20; that stretch reads MATRLLCYTVLCLLGARILN. The v segment stretch occupies residues 21-115; sequence SKVIQTPRYL…SALYLCASSL (95 aa). Cys42 and Cys111 are disulfide-bonded. A d segment region spans residues 116-118; it reads FGT. The segment at 119-135 is j segment; that stretch reads SDYTFGSGTRLLVIGKA.

The protein is T-cell receptor beta chain V region 3H.25 of Mus musculus (Mouse).